A 233-amino-acid chain; its full sequence is Orotidine 5'-phosphate decarboxylase (233 aa).

Substrate is bound by residues aspartate 13, lysine 35, 62 to 71 (DLKFHDIPNT), threonine 122, arginine 182, glutamine 191, glycine 211, and arginine 212. Lysine 64 (proton donor) is an active-site residue.

Belongs to the OMP decarboxylase family. Type 1 subfamily. In terms of assembly, homodimer.

It catalyses the reaction orotidine 5'-phosphate + H(+) = UMP + CO2. It participates in pyrimidine metabolism; UMP biosynthesis via de novo pathway; UMP from orotate: step 2/2. Catalyzes the decarboxylation of orotidine 5'-monophosphate (OMP) to uridine 5'-monophosphate (UMP). This chain is Orotidine 5'-phosphate decarboxylase, found in Pseudomonas fluorescens (strain ATCC BAA-477 / NRRL B-23932 / Pf-5).